The chain runs to 426 residues: Histidine--tRNA ligase (426 aa).

It belongs to the class-II aminoacyl-tRNA synthetase family. In terms of assembly, homodimer.

It localises to the cytoplasm. It catalyses the reaction tRNA(His) + L-histidine + ATP = L-histidyl-tRNA(His) + AMP + diphosphate + H(+). This chain is Histidine--tRNA ligase, found in Streptococcus pyogenes serotype M3 (strain ATCC BAA-595 / MGAS315).